A 287-amino-acid polypeptide reads, in one-letter code: uncharacterized protein (287 aa).

The protein belongs to the A.longa ORF167/ORF288 family.

The protein resides in the plastid. This is an uncharacterized protein from Euglena longa (Euglenophycean alga).